The primary structure comprises 540 residues: Anti-sigma-I factor RsgI7 (540 aa).

The RsgI N-terminal anti-sigma domain occupies 1-48; that stretch reads MRAMVVDMNDKYAVVVNKEGQYIKIKRKAEHRLGYQVELPDRVIGFER. At 1 to 50 the chain is on the cytoplasmic side; it reads MRAMVVDMNDKYAVVVNKEGQYIKIKRKAEHRLGYQVELPDRVIGFERRT. Residues 51 to 73 form a helical membrane-spanning segment; it reads LLKVVSVAAALLIVSSISFAVYS. At 74–540 the chain is on the extracellular side; it reads YNLPYSYVNV…PGKEILKKRC (467 aa). Composition is skewed to basic and acidic residues over residues 238–256, 319–329, 338–351, 359–370, and 398–419; these read DIKKVPNENNRKDDDKKVN, SGIDKGNKDSK, NDVKKDNKDNKTNS, VSKDNKNDKADG, and SKDDKDNKHVDSKDKMNNEDNK. Disordered regions lie at residues 238-429 and 481-540; these read DIKK…CPQY and QEEQ…KKRC. Positions 451 to 501 form a coiled coil; that stretch reads KEDMTKQNDEWFKKMQEEQKKQYDEWLKKMQEEQKKQHDEWVKKMEEMKNT.

In terms of assembly, interacts (via RsgI N-terminal anti-sigma domain) with SigI7.

It localises to the cell membrane. In terms of biological role, anti-sigma factor for SigI7. Negatively regulates SigI7 activity through direct interaction. This is Anti-sigma-I factor RsgI7 from Acetivibrio thermocellus (strain ATCC 27405 / DSM 1237 / JCM 9322 / NBRC 103400 / NCIMB 10682 / NRRL B-4536 / VPI 7372) (Clostridium thermocellum).